The following is a 667-amino-acid chain: Polypeptide N-acetylgalactosaminyltransferase 3 (667 aa).

Residues 1 to 12 lie on the Cytoplasmic side of the membrane; that stretch reads MGLRFQQLKKLW. A helical; Signal-anchor for type II membrane protein membrane pass occupies residues 13–35; sequence LLYLFLLFFAFFMFAISINLYVA. Residues 36–667 are Lumenal-facing; the sequence is SIQGGDAEMR…WGFIPLPWRM (632 aa). N-linked (GlcNAc...) asparagine glycans are attached at residues asparagine 75 and asparagine 129. 5 disulfide bridges follow: cysteine 140–cysteine 375, cysteine 366–cysteine 446, cysteine 526–cysteine 547, cysteine 572–cysteine 601, and cysteine 626–cysteine 649. The tract at residues 149 to 259 is catalytic subdomain A; the sequence is LPSTSVIIVF…RGWLEPLLSR (111 aa). Residues aspartate 190 and arginine 220 each contribute to the substrate site. Mn(2+) contacts are provided by aspartate 243 and histidine 245. Asparagine 279 and asparagine 313 each carry an N-linked (GlcNAc...) asparagine glycan. The segment at 321–383 is catalytic subdomain B; the sequence is PIATPGMAGG…PCSHVGHVFR (63 aa). Tryptophan 352 is a binding site for substrate. Histidine 380 is a Mn(2+) binding site. Arginine 383 and tyrosine 388 together coordinate substrate. Asparagine 433 is a glycosylation site (N-linked (GlcNAc...) asparagine). Residues 513–661 form the Ricin B-type lectin domain; the sequence is EELMALIDLE…KDITQKWGFI (149 aa). Asparagine 590 carries N-linked (GlcNAc...) asparagine glycosylation.

It belongs to the glycosyltransferase 2 family. GalNAc-T subfamily. Requires Mn(2+) as cofactor. Expressed in developing oocytes and egg chambers. During embryonic stages 9-11, expressed in the primordiums of the foregut, midgut and hindgut. During embryonic stages 12-13, expression is found uniquely in the posterior spiracle. During embryonic stages 14-17, expressed in the pharynx, esophagus and posterior spiracles. Expression observed in the epidermis during embryonic stages 16-17. In third instar larvae, expressed ubiquitously in wing, with increased expression in pleura and notum, eye-antennal, leg and haltere imaginal disks.

The protein resides in the golgi apparatus membrane. It carries out the reaction L-seryl-[protein] + UDP-N-acetyl-alpha-D-galactosamine = a 3-O-[N-acetyl-alpha-D-galactosaminyl]-L-seryl-[protein] + UDP + H(+). The catalysed reaction is L-threonyl-[protein] + UDP-N-acetyl-alpha-D-galactosamine = a 3-O-[N-acetyl-alpha-D-galactosaminyl]-L-threonyl-[protein] + UDP + H(+). Its pathway is protein modification; protein glycosylation. Its function is as follows. Catalyzes the initial reaction in O-linked oligosaccharide biosynthesis, the transfer of an N-acetyl-D-galactosamine residue to a serine or threonine residue on the protein receptor. It can both act as a peptide transferase that transfers GalNAc onto unmodified peptide substrates, and as a glycopeptide transferase that requires the prior addition of a GalNAc on a peptide before adding additional GalNAc moieties. Prefers EA2 as substrate. Has weak activity toward Muc5AC-3, -13 and -3/13 substrates. Plays a critical role in the regulation of integrin-mediated cell adhesion during wing development by influencing, via glycosylation, the secretion and localization of the integrin ligand Tig to the basal cell layer interface. Might have a role in protein O-glycosylation in the Golgi and thereby in establishing and/or maintaining a proper secretory apparatus structure. Together with Pgant35A, regulates integrin levels and activity-dependent integrin signaling at the synapse in neurons and muscles. The polypeptide is Polypeptide N-acetylgalactosaminyltransferase 3 (Drosophila melanogaster (Fruit fly)).